Consider the following 348-residue polypeptide: Phospho-2-dehydro-3-deoxyheptonate aldolase, Trp-sensitive (348 aa).

It belongs to the class-I DAHP synthase family.

The catalysed reaction is D-erythrose 4-phosphate + phosphoenolpyruvate + H2O = 7-phospho-2-dehydro-3-deoxy-D-arabino-heptonate + phosphate. The protein operates within metabolic intermediate biosynthesis; chorismate biosynthesis; chorismate from D-erythrose 4-phosphate and phosphoenolpyruvate: step 1/7. In terms of biological role, stereospecific condensation of phosphoenolpyruvate (PEP) and D-erythrose-4-phosphate (E4P) giving rise to 3-deoxy-D-arabino-heptulosonate-7-phosphate (DAHP). The chain is Phospho-2-dehydro-3-deoxyheptonate aldolase, Trp-sensitive (aroH) from Shigella flexneri.